The chain runs to 380 residues: Cytochrome b (380 aa).

The next 4 membrane-spanning stretches (helical) occupy residues 33-53 (FGSLLGLCLVTQIATGLFLAM), 77-98 (WLIRSIHANGASFFFICIYLHI), 113-133 (WTIGVVLLLLVMMTAFVGYVL), and 178-198 (FFAFHFLFPFIIAAATVIHLL). 2 residues coordinate heme b: His83 and His97. The heme b site is built by His182 and His196. His201 lines the a ubiquinone pocket. A run of 4 helical transmembrane segments spans residues 226–246 (YKDLLGFAVLLTALASLALFS), 288–308 (LGGVLALLFSILVLMLVPFLH), 320–340 (VTQFLFWSLVADVMILTWIGG), and 347–367 (FVIIGQVASLIYFSLFLVLIP).

Belongs to the cytochrome b family. The cytochrome bc1 complex contains 3 respiratory subunits (MT-CYB, CYC1 and UQCRFS1), 2 core proteins (UQCRC1 and UQCRC2) and probably 6 low-molecular weight proteins. Requires heme b as cofactor.

Its subcellular location is the mitochondrion inner membrane. Functionally, component of the ubiquinol-cytochrome c reductase complex (complex III or cytochrome b-c1 complex) that is part of the mitochondrial respiratory chain. The b-c1 complex mediates electron transfer from ubiquinol to cytochrome c. Contributes to the generation of a proton gradient across the mitochondrial membrane that is then used for ATP synthesis. The sequence is that of Cytochrome b (mt-cyb) from Kareius bicoloratus (Stone flounder).